Consider the following 253-residue polypeptide: Small ribosomal subunit protein uS2 (253 aa).

Belongs to the universal ribosomal protein uS2 family.

This Parvibaculum lavamentivorans (strain DS-1 / DSM 13023 / NCIMB 13966) protein is Small ribosomal subunit protein uS2.